The chain runs to 166 residues: Packaging efficiency factor P6 (166 aa).

Residues 134–166 (ILPESAGDQQEAEPVPSVGDQQETAPRKRFRAI) are disordered.

Heterodimer of P6 and P9; further multimerizes as hexamers of heterodimers. Part of the dodecameric portal complex that is composed of the packaging efficiency factor P6, the DNA packaging ATPase P9, and the internal heterododecamer P20/P22 which spans the virion inner membrane.

It localises to the virion. Together with the packaging ATPase P9, forms the external part of the portal vertex that is embeded in the capsid and which plays critical roles in genome packaging and genome ejection. Both proteins multimerize as a single ring-shaped heterdodecamer arranged around a central channel. In Acinetobacter calcoaceticus (Arthrobacter siderocapsulatus), this protein is Packaging efficiency factor P6 (VI).